Reading from the N-terminus, the 156-residue chain is Endoribonuclease YbeY (156 aa).

Zn(2+)-binding residues include His-117, His-121, and His-127.

The protein belongs to the endoribonuclease YbeY family. Zn(2+) serves as cofactor.

The protein localises to the cytoplasm. Functionally, single strand-specific metallo-endoribonuclease involved in late-stage 70S ribosome quality control and in maturation of the 3' terminus of the 16S rRNA. The polypeptide is Endoribonuclease YbeY (Shewanella pealeana (strain ATCC 700345 / ANG-SQ1)).